Reading from the N-terminus, the 393-residue chain is S-adenosylmethionine synthase (393 aa).

Histidine 16 is an ATP binding site. Mg(2+) is bound at residue aspartate 18. K(+) is bound at residue glutamate 44. L-methionine is bound by residues glutamate 57 and glutamine 100. The tract at residues 100 to 110 (QSNDIAQGVDH) is flexible loop. ATP contacts are provided by residues 167-169 (DAK), 238-239 (RF), aspartate 247, 253-254 (RK), alanine 270, and lysine 274. Position 247 (aspartate 247) interacts with L-methionine. An L-methionine-binding site is contributed by lysine 278.

This sequence belongs to the AdoMet synthase family. As to quaternary structure, homotetramer; dimer of dimers. Mg(2+) serves as cofactor. K(+) is required as a cofactor.

Its subcellular location is the cytoplasm. The enzyme catalyses L-methionine + ATP + H2O = S-adenosyl-L-methionine + phosphate + diphosphate. It functions in the pathway amino-acid biosynthesis; S-adenosyl-L-methionine biosynthesis; S-adenosyl-L-methionine from L-methionine: step 1/1. Catalyzes the formation of S-adenosylmethionine (AdoMet) from methionine and ATP. The overall synthetic reaction is composed of two sequential steps, AdoMet formation and the subsequent tripolyphosphate hydrolysis which occurs prior to release of AdoMet from the enzyme. The protein is S-adenosylmethionine synthase of Variovorax paradoxus (strain S110).